A 228-amino-acid chain; its full sequence is R-spondin-4 (228 aa).

A signal peptide spans 1–19; the sequence is MRAPLCLLLLLAHAVDMLA. N-linked (GlcNAc...) asparagine glycosylation occurs at Asn34. Disulfide bonds link Cys35/Cys41, Cys38/Cys47, Cys50/Cys69, Cys73/Cys88, Cys91/Cys98, Cys95/Cys104, Cys107/Cys118, Cys122/Cys135, Cys139/Cys181, Cys150/Cys157, and Cys190/Cys196. Residues 85–128 form an FU repeat; sequence ANRCKKCGATCESCFSQDFCIRCKRRFHLYKGKCLPSCPPGTLT. Residues 138–197 form the TSP type-1 domain; it reads ECEPSPWGSWSPCIHNGKTCGSGWGLETRVREAGPAKQEETASCRVLSESRKCPIKRLCP. Positions 193 to 228 are disordered; the sequence is KRLCPGERNPRQKNRKDRRQRKDRKLERRPHQRGSQ. The segment covering 203-228 has biased composition (basic residues); that stretch reads RQKNRKDRRQRKDRKLERRPHQRGSQ.

This sequence belongs to the R-spondin family. As to quaternary structure, binds heparin. Interacts with LGR4, LGR5 and LGR6.

It localises to the secreted. Functionally, activator of the canonical Wnt signaling pathway by acting as a ligand for LGR4-6 receptors. Upon binding to LGR4-6 (LGR4, LGR5 or LGR6), LGR4-6 associate with phosphorylated LRP6 and frizzled receptors that are activated by extracellular Wnt receptors, triggering the canonical Wnt signaling pathway to increase expression of target genes. Also regulates the canonical Wnt/beta-catenin-dependent pathway and non-canonical Wnt signaling by acting as an inhibitor of ZNRF3, an important regulator of the Wnt signaling pathway. The chain is R-spondin-4 (Rspo4) from Mus musculus (Mouse).